We begin with the raw amino-acid sequence, 238 residues long: Large ribosomal subunit protein uL1 (238 aa).

It belongs to the universal ribosomal protein uL1 family. As to quaternary structure, part of the 50S ribosomal subunit.

Binds directly to 23S rRNA. The L1 stalk is quite mobile in the ribosome, and is involved in E site tRNA release. Functionally, protein L1 is also a translational repressor protein, it controls the translation of the L11 operon by binding to its mRNA. The polypeptide is Large ribosomal subunit protein uL1 (Trichodesmium erythraeum (strain IMS101)).